The following is a 307-amino-acid chain: Elongation factor Ts (307 aa).

Residues 79–82 (TDFV) are involved in Mg(2+) ion dislocation from EF-Tu.

This sequence belongs to the EF-Ts family.

It localises to the cytoplasm. Associates with the EF-Tu.GDP complex and induces the exchange of GDP to GTP. It remains bound to the aminoacyl-tRNA.EF-Tu.GTP complex up to the GTP hydrolysis stage on the ribosome. The protein is Elongation factor Ts (tsf) of Bartonella quintana (strain Toulouse) (Rochalimaea quintana).